The following is a 48-amino-acid chain: Large ribosomal subunit protein bL32c (48 aa).

Belongs to the bacterial ribosomal protein bL32 family.

Its subcellular location is the plastid. It is found in the chloroplast. The sequence is that of Large ribosomal subunit protein bL32c (rpl32) from Vicia faba (Broad bean).